The primary structure comprises 866 residues: Rifampicin phosphotransferase (866 aa).

The segment at 1 to 313 (MSSLVLGLHE…FYIVQSRPIT (313 aa)) is ATP-binding. Residues lysine 22, arginine 116, glycine 131, threonine 135, glutamine 182, glutamate 296, glutamine 308, and arginine 310 each contribute to the ATP site. The segment at 326–754 (NHVYISVGHQ…TSDGEIVTGE (429 aa)) is rifampicin-binding. The interval 410-429 (IPNDKTAPNPSRGNADMPAQ) is disordered. The interval 767-865 (GLPVSSGVIE…VHGTEGYIEI (99 aa)) is swivel phosphohistidine. Histidine 825 serves as the catalytic Tele-phosphohistidine intermediate.

Belongs to the rifampicin phosphotransferase family.

It carries out the reaction rifampicin + ATP + H2O = 21-phosphorifampicin + AMP + phosphate + 2 H(+). In terms of biological role, catalyzes the phosphorylation of rifampicin, also known as rifampin (RIF), leading to its inactivation. The protein is Rifampicin phosphotransferase of Bacillus subtilis (strain 168).